The following is a 481-amino-acid chain: Trichosetin biosynthesis cluster MFS transporter (481 aa).

The span at M1 to Q13 shows a compositional bias: polar residues. The interval M1 to L63 is disordered. Over residues G20–E31 the composition is skewed to basic and acidic residues. N64 carries an N-linked (GlcNAc...) asparagine glycan. A helical transmembrane segment spans residues L72–A92. N-linked (GlcNAc...) asparagine glycosylation is present at N103. 5 consecutive transmembrane segments (helical) span residues A111–L131, V147–F167, I169–L189, A200–V220, and W228–M248. N252 carries an N-linked (GlcNAc...) asparagine glycan. A run of 5 helical transmembrane segments spans residues P302–F322, L353–T373, W380–P400, I403–L423, and G446–F466.

The protein belongs to the major facilitator superfamily.

The protein resides in the cell membrane. Efflux pump required for efficient secretion of trichosetin or other secondary metabolies produced by the trichosetin gene cluster. Plays a crucial role in detoxification of the toxic trichosetin in Gibberella fujikuroi cells. The sequence is that of Trichosetin biosynthesis cluster MFS transporter from Gibberella fujikuroi (strain CBS 195.34 / IMI 58289 / NRRL A-6831) (Bakanae and foot rot disease fungus).